A 103-amino-acid polypeptide reads, in one-letter code: MYAVIATGGKQYRVAQGDVLRVEKLDAEAGATVEFDNVLLVGSGDDVKVGTPNVEGGKVTATVKAHGRGEKVMIIKFRRRKHHRKQMGHRQDFTEVEITGISG.

This sequence belongs to the bacterial ribosomal protein bL21 family. In terms of assembly, part of the 50S ribosomal subunit. Contacts protein L20.

This protein binds to 23S rRNA in the presence of protein L20. This Thioalkalivibrio sulfidiphilus (strain HL-EbGR7) protein is Large ribosomal subunit protein bL21.